We begin with the raw amino-acid sequence, 155 residues long: MYKMQLLSCIALMLVLVANSAPITSSSTKETEQQMEQLLLDLQLLLNGVNNYENPQLSRMLTFKFYTPKKATEFTHLQCLAEELKNLEEVLGLPQSKNVHLTDTKELISNMNVTLLKLKGSETSYNCEYDDETATITEFLNKWITFCQSIFSTLT.

The signal sequence occupies residues 1 to 20 (MYKMQLLSCIALMLVLVANS). The O-linked (GalNAc...) threonine glycan is linked to threonine 24. A disulfide bond links cysteine 79 and cysteine 127. Asparagine 112 carries N-linked (GlcNAc...) asparagine glycosylation.

It belongs to the IL-2 family.

The protein resides in the secreted. Functionally, cytokine produced by activated CD4-positive helper T-cells and to a lesser extend activated CD8-positive T-cells and natural killer (NK) cells that plays pivotal roles in the immune response and tolerance. Binds to a receptor complex composed of either the high-affinity trimeric IL-2R (IL2RA/CD25, IL2RB/CD122 and IL2RG/CD132) or the low-affinity dimeric IL-2R (IL2RB and IL2RG). Interaction with the receptor leads to oligomerization and conformation changes in the IL-2R subunits resulting in downstream signaling starting with phosphorylation of JAK1 and JAK3. In turn, JAK1 and JAK3 phosphorylate the receptor to form a docking site leading to the phosphorylation of several substrates including STAT5. This process leads to activation of several pathways including STAT, phosphoinositide-3-kinase/PI3K and mitogen-activated protein kinase/MAPK pathways. Functions as a T-cell growth factor and can increase NK-cell cytolytic activity as well. Promotes strong proliferation of activated B-cells and subsequently immunoglobulin production. Plays a pivotal role in regulating the adaptive immune system by controlling the survival and proliferation of regulatory T-cells, which are required for the maintenance of immune tolerance. Moreover, participates in the differentiation and homeostasis of effector T-cell subsets, including Th1, Th2, Th17 as well as memory CD8-positive T-cells. This Vulpes vulpes (Red fox) protein is Interleukin-2 (IL2).